We begin with the raw amino-acid sequence, 791 residues long: Ubiquitin carboxyl-terminal hydrolase 10-A (791 aa).

Composition is skewed to polar residues over residues Phe-118–Gly-139 and Asp-270–Glu-284. Disordered regions lie at residues Phe-118–Tyr-156 and Asp-270–Ala-291. A USP domain is found at Arg-408–Val-788. The Nucleophile role is filled by Cys-417. The interval Glu-560–Asn-580 is disordered. Catalysis depends on His-742, which acts as the Proton acceptor.

The protein belongs to the peptidase C19 family. USP10 subfamily.

It localises to the cytoplasm. It is found in the nucleus. It carries out the reaction Thiol-dependent hydrolysis of ester, thioester, amide, peptide and isopeptide bonds formed by the C-terminal Gly of ubiquitin (a 76-residue protein attached to proteins as an intracellular targeting signal).. In terms of biological role, hydrolase that can remove conjugated ubiquitin from target proteins such as p53/tp53, rps2/us5, rps3/us3, rps10/eS10, becn1, snx3 and cftr. Acts as an essential regulator of p53/tp53 stability: in unstressed cells, specifically deubiquitinates p53/tp53 in the cytoplasm, leading to counteracts MDM2 action and stabilize p53/tp53. Following DNA damage, translocates to the nucleus and deubiquitinates p53/tp53, leading to regulate the p53/TP53-dependent DNA damage response. Component of a regulatory loop that controls autophagy and p53/tp53 levels. Plays a key role in 40S ribosome subunit recycling when a ribosome has stalled during translation: acts both by inhibiting formation of stress granules, which store stalled translation pre-initiation complexes, and mediating deubiquitination of 40S ribosome subunits. Deubiquitinates cftr in early endosomes, enhancing its endocytic recycling. This is Ubiquitin carboxyl-terminal hydrolase 10-A (usp10-a) from Xenopus laevis (African clawed frog).